Consider the following 536-residue polypeptide: G-protein coupled receptor Mth2 (536 aa).

5 disulfides stabilise this stretch: C17-C71, C73-C78, C82-C177, C83-C96, and C138-C197. N24 and N33 each carry an N-linked (GlcNAc...) asparagine glycan. N-linked (GlcNAc...) asparagine glycans are attached at residues N103, N113, N118, N159, and N184. A helical transmembrane segment spans residues 212 to 232 (YAMMFSIPFMMLTIAVYLLIP). The Cytoplasmic portion of the chain corresponds to 233-241 (ELRNQHGKS). The chain crosses the membrane as a helical span at residues 242–262 (LVCYLIGLTVGYSSLCYVQLY). Residues 263 to 273 (QVDATGVTCKV) are Extracellular-facing. The helical transmembrane segment at 274 to 294 (FGYTAYFFFMGAYMWLSVISF) threads the bilayer. At 295–314 (DLWHNFRGTRGINRFQEKKR) the chain is on the cytoplasmic side. A helical membrane pass occupies residues 315-335 (FLFYSLYSWGIALVFLAFTYC). At 336-365 (AQQLSNLPDNLKPGIGDGVYCWLDMSNWAA) the chain is on the extracellular side. A helical transmembrane segment spans residues 366–386 (MIYFYGPILAIVVANTIMFIM). At 387–417 (TAIKIHGVQREMARIIASENSTKNLRTEKDK) the chain is on the cytoplasmic side. The chain crosses the membrane as a helical span at residues 418–438 (FGLFLRLFLIMGITWLTELIS). Over 439–449 (YFVGSDKGWSK) the chain is Extracellular. A helical transmembrane segment spans residues 450-470 (LFYISDLANAMQGFLIFMLFV). The Cytoplasmic segment spans residues 471 to 536 (MKKKVKHLIT…VDPQKTTIFR (66 aa)). The segment at 487 to 506 (RDGSNQRQSQYSTKTTSSSV) is disordered. The segment covering 492-505 (QRQSQYSTKTTSSS) has biased composition (low complexity).

Belongs to the G-protein coupled receptor 2 family. Mth subfamily. As to quaternary structure, homodimer.

The protein localises to the cell membrane. Involved in biological aging and stress response. Essential for adult survival. This chain is G-protein coupled receptor Mth2 (mth2), found in Drosophila simulans (Fruit fly).